We begin with the raw amino-acid sequence, 101 residues long: Small integral membrane protein 14 (101 aa).

The segment covering 71-81 has biased composition (basic and acidic residues); sequence SDRRTADDAAI. The segment at 71 to 101 is disordered; that stretch reads SDRRTADDAAIEKPTGSSDDNTPPPPPPSAM. A compositionally biased stretch (pro residues) spans 92-101; it reads TPPPPPPSAM.

The polypeptide is Small integral membrane protein 14 (Caenorhabditis elegans).